We begin with the raw amino-acid sequence, 169 residues long: Lipoprotein signal peptidase (169 aa).

3 consecutive transmembrane segments (helical) span residues 1–21 (MPES…LILV), 68–88 (WQRW…VVWL), and 94–114 (HETL…GNLY). Residues aspartate 124 and aspartate 143 contribute to the active site. A helical membrane pass occupies residues 135–155 (FFPAFNLADTFITIGAILLAL).

Belongs to the peptidase A8 family.

Its subcellular location is the cell inner membrane. It carries out the reaction Release of signal peptides from bacterial membrane prolipoproteins. Hydrolyzes -Xaa-Yaa-Zaa-|-(S,diacylglyceryl)Cys-, in which Xaa is hydrophobic (preferably Leu), and Yaa (Ala or Ser) and Zaa (Gly or Ala) have small, neutral side chains.. It participates in protein modification; lipoprotein biosynthesis (signal peptide cleavage). Its function is as follows. This protein specifically catalyzes the removal of signal peptides from prolipoproteins. This Ectopseudomonas mendocina (strain ymp) (Pseudomonas mendocina) protein is Lipoprotein signal peptidase.